Reading from the N-terminus, the 539-residue chain is MGSLPEQFVFRSRLPDIAIPDHLPLHDYVFERLADRRDRACLIDGATGETLSFGDVDALSRRVAAGLSSIGVCHGSTVMLLLPNSVEFAVAFLASSRLGAVTTTANPLHTPPEIAKQVAASGATVVVTEPAFVAKVSGLAGVTVVATGGGAERCASFAGLAAADGSALPEVAIDVANDAVALPYSSGTTGLPKGVMLSHRGLVTSVAQLVDGENPNLHLREDDVVLCVLPMFHVYSLHSILLCGMRAGAAIVVMKRFDTVKMLQLVERHGVTIAPLVPPIVVEMAKSDALDRHDLSSIRMVISGAAPMGKELQDIVHAKLPNAVLGQGYGMTEAGPVLSMCMAFAKEPTPVKSGACGTVVRNAELKIVDPDTGLSLPRNQPGEICIRGKQIMKGYLNNPEATEKTIDKDGWLHTGDIGFVDDDDEIFIVDRLKELIKYKGFQVAPAELEAMLIAHAAVADAAVVPMKDDSCGEIPVAFVVARDGSGITDDEIKQYVAKQVVFYKRLHKIFFVDAIPKAPSGKILRKDLRAKLAAGIPAC.

The ATP site is built by S185, S186, G187, T188, T189, and K193. Residues Y235 and S239 each coordinate (E)-4-coumaroyl-AMP. R256 is a CoA binding site. The segment at 258–327 (DTVKMLQLVE…AKLPNAVLGQ (70 aa)) is SBD1. 5 residues coordinate (E)-4-coumaroyl-AMP: A305, Q327, G328, T332, and M340. Positions 327, 328, and 332 each coordinate ATP. Residues 328-395 (GYGMTEAGPV…IRGKQIMKGY (68 aa)) are SBD2. ATP contacts are provided by D416 and R431. Residues K433 and K437 each coordinate (E)-4-coumaroyl-AMP. 2 residues coordinate CoA: K439 and G440. K522 contacts ATP.

It belongs to the ATP-dependent AMP-binding enzyme family. Mg(2+) serves as cofactor. As to expression, expressed in roots, stems, leaf blades, leaf sheaths and spikelets.

It carries out the reaction (E)-ferulate + ATP + CoA = (E)-feruloyl-CoA + AMP + diphosphate. The enzyme catalyses (E)-4-coumarate + ATP + CoA = (E)-4-coumaroyl-CoA + AMP + diphosphate. It catalyses the reaction (E)-sinapate + ATP + CoA = (E)-sinapoyl-CoA + AMP + diphosphate. The catalysed reaction is (E)-caffeate + ATP + CoA = (E)-caffeoyl-CoA + AMP + diphosphate. It carries out the reaction (E)-cinnamate + ATP + CoA = (E)-cinnamoyl-CoA + AMP + diphosphate. The enzyme catalyses (E)-ferulate + ATP + H(+) = (E)-feruloyl-AMP + diphosphate. It catalyses the reaction (E)-feruloyl-AMP + CoA = (E)-feruloyl-CoA + AMP + H(+). The catalysed reaction is (E)-4-coumarate + ATP + H(+) = (E)-4-coumaroyl-AMP + diphosphate. It carries out the reaction (E)-4-coumaroyl-AMP + CoA = (E)-4-coumaroyl-CoA + AMP + H(+). The enzyme catalyses (E)-sinapate + ATP + H(+) = (E)-sinapoyl-AMP + diphosphate. It catalyses the reaction (E)-sinapoyl-AMP + CoA = (E)-sinapoyl-CoA + AMP + H(+). The catalysed reaction is (E)-caffeate + ATP + H(+) = (E)-caffeoyl-AMP + diphosphate. It carries out the reaction (E)-caffeoyl-AMP + CoA = (E)-caffeoyl-CoA + AMP + H(+). It functions in the pathway phytoalexin biosynthesis; 3,4',5-trihydroxystilbene biosynthesis; 3,4',5-trihydroxystilbene from trans-4-coumarate: step 1/2. Its function is as follows. Involved in the phenylpropanoid metabolism by mediating the activation of a number of hydroxycinnamates for the biosynthesis of monolignols and other phenolic secondary metabolites. Catalyzes the formation of CoA esters of cinnamate, 4-coumarate, caffeate and ferulate. Is also able to convert sinapate to its corresponding CoA ester, a reaction that is rarely observed in 4CL catalysis. Is more efficient with substrates in the following order: ferulate &gt; 4-coumarate &gt; sinapate &gt; caffeate &gt; cinnamate. Follows a two-step reaction mechanism, wherein the carboxylate substrate first undergoes adenylation by ATP, followed by a thioesterification in the presence of CoA to yield the final CoA thioesters. The sequence is that of 4-coumarate--CoA ligase 5 from Oryza sativa subsp. japonica (Rice).